The following is a 67-amino-acid chain: uncharacterized protein (67 aa).

The next 2 membrane-spanning stretches (helical) occupy residues 10–30 and 40–60; these read EFFI…ITMW and LMVG…WMVF.

The protein belongs to the plectrovirus ORF10 family.

It localises to the host membrane. This is an uncharacterized protein from Spiroplasma citri (SpV1).